We begin with the raw amino-acid sequence, 642 residues long: Threonine--tRNA ligase (642 aa).

The TGS domain maps to Met-1–Thr-61. The tract at residues Asp-243 to Pro-534 is catalytic. Cys-334, His-385, and His-511 together coordinate Zn(2+).

This sequence belongs to the class-II aminoacyl-tRNA synthetase family. Homodimer. Zn(2+) is required as a cofactor.

It localises to the cytoplasm. It carries out the reaction tRNA(Thr) + L-threonine + ATP = L-threonyl-tRNA(Thr) + AMP + diphosphate + H(+). In terms of biological role, catalyzes the attachment of threonine to tRNA(Thr) in a two-step reaction: L-threonine is first activated by ATP to form Thr-AMP and then transferred to the acceptor end of tRNA(Thr). Also edits incorrectly charged L-seryl-tRNA(Thr). The sequence is that of Threonine--tRNA ligase from Tolumonas auensis (strain DSM 9187 / NBRC 110442 / TA 4).